The chain runs to 645 residues: ATP-dependent zinc metalloprotease FtsH (645 aa).

The Cytoplasmic portion of the chain corresponds to 1-8 (MDFNREHK). A helical transmembrane segment spans residues 9-29 (INFLYVLAAMVGVLLIQSLVS). Residues 30–105 (QPDHIRTIPY…FSGEPEPGPW (76 aa)) are Periplasmic-facing. The chain crosses the membrane as a helical span at residues 106–126 (PTILGWLMPIVGFALVWMFLI). Over 127 to 645 (RPMSMGPGMD…ALTVEGGEAQ (519 aa)) the chain is Cytoplasmic. Residue 199–206 (GPPGTGKT) coordinates ATP. Position 423 (histidine 423) interacts with Zn(2+). The active site involves glutamate 424. Positions 427 and 500 each coordinate Zn(2+). The tract at residues 612-645 (SASVLRDGGDGAADAGQDRSGEHRALTVEGGEAQ) is disordered. Basic and acidic residues predominate over residues 627–637 (GQDRSGEHRAL).

This sequence in the central section; belongs to the AAA ATPase family. In the C-terminal section; belongs to the peptidase M41 family. Homohexamer. Zn(2+) serves as cofactor.

It localises to the cell inner membrane. In terms of biological role, acts as a processive, ATP-dependent zinc metallopeptidase for both cytoplasmic and membrane proteins. Plays a role in the quality control of integral membrane proteins. In Paraburkholderia phymatum (strain DSM 17167 / CIP 108236 / LMG 21445 / STM815) (Burkholderia phymatum), this protein is ATP-dependent zinc metalloprotease FtsH.